Consider the following 438-residue polypeptide: GTPase Der (438 aa).

EngA-type G domains lie at 4–168 (PLVT…KSEG) and 177–352 (IKIA…DNYS). GTP is bound by residues 10–17 (GRPNVGKS), 57–61 (DTGGI), 120–123 (NKID), 183–190 (GKPNVGKS), 230–234 (DTAGL), and 295–298 (NKWD). A KH-like domain is found at 353-437 (KRIATGVLND…GIKMIFKERK (85 aa)).

It belongs to the TRAFAC class TrmE-Era-EngA-EngB-Septin-like GTPase superfamily. EngA (Der) GTPase family. Associates with the 50S ribosomal subunit.

Functionally, GTPase that plays an essential role in the late steps of ribosome biogenesis. The polypeptide is GTPase Der (Clostridium acetobutylicum (strain ATCC 824 / DSM 792 / JCM 1419 / IAM 19013 / LMG 5710 / NBRC 13948 / NRRL B-527 / VKM B-1787 / 2291 / W)).